The following is a 245-amino-acid chain: Thiopurine S-methyltransferase (245 aa).

At S14 the chain carries Phosphoserine. 29-40 serves as a coordination point for S-adenosyl-L-methionine; the sequence is WQDKWVNGKTAF. F40 serves as a coordination point for substrate. K58 carries the N6-acetyllysine modification. S-adenosyl-L-methionine contacts are provided by residues L69, E90, 134-135, and R152; that span reads SI.

The protein belongs to the class I-like SAM-binding methyltransferase superfamily. TPMT family. Monomer.

The protein localises to the cytoplasm. It carries out the reaction S-adenosyl-L-methionine + a thiopurine = S-adenosyl-L-homocysteine + a thiopurine S-methylether.. It catalyses the reaction mercaptopurine + S-adenosyl-L-methionine = 6-methylthiopurine + S-adenosyl-L-homocysteine + H(+). The enzyme catalyses 6-thioguanine + S-adenosyl-L-methionine = 6-methylthioguanine + S-adenosyl-L-homocysteine + H(+). Inhibited by S-adenosyl-L-homocysteine (SAH). Functionally, catalyzes the S-methylation of thiopurine drugs such as 6-mercaptopurine (also called mercaptopurine, 6-MP or its brand name Purinethol) and 6-thioguanine (also called tioguanine or 6-TG) using S-adenosyl-L-methionine as the methyl donor. TPMT activity modulates the cytotoxic effects of thiopurine prodrugs. A natural substrate for this enzyme has yet to be identified. This is Thiopurine S-methyltransferase (TPMT) from Homo sapiens (Human).